Reading from the N-terminus, the 72-residue chain is LITAF domain-containing protein (72 aa).

Residues 1–71 (MPVQAVCPYC…CQRELFYYHR (71 aa)) form the LITAF domain. Zn(2+) is bound by residues Cys-7 and Cys-10. Residues 22-45 (PGALTWLLCTTLFLFGYVLGCCFL) are membrane-binding amphipathic helix. Zn(2+) is bound by residues Cys-59 and Cys-62.

The protein belongs to the CDIP1/LITAF family.

Its subcellular location is the membrane. The protein is LITAF domain-containing protein of Homo sapiens (Human).